A 976-amino-acid polypeptide reads, in one-letter code: Poly(ADP-ribose) glycohydrolase (976 aa).

At M1 the chain carries N-acetylmethionine. Positions 1 to 69 (MNAGPGCEPC…GRAGQHRGSA (69 aa)) are disordered. Residues 1 to 456 (MNAGPGCEPC…LSPDKKWLGT (456 aa)) form an A-domain region. The Nuclear localization signal signature appears at 10–16 (CTKRPRW). Residue S22 is modified to Phosphoserine. Over residues 37–46 (RVLDPKDAHV) the composition is skewed to basic and acidic residues. A Phosphoserine modification is found at S68. The short motif at 76–83 (QKTITSWM) is the PIP-box (PCNA interacting peptide) element. Phosphoserine is present on residues S133 and S137. Position 139 is a phosphothreonine (T139). The tract at residues 183–350 (SNANIDRSPQ…PSRFQARDAD (168 aa)) is disordered. Basic and acidic residues-rich tracts occupy residues 191–206 (PQNDDHSDTDSEENRD) and 222–233 (TTEDEQAREAKS). At S197 the chain carries Phosphoserine. T199 carries the phosphothreonine modification. 7 positions are modified to phosphoserine: S261, S264, S286, S291, S298, S302, and S316. Residues 316–331 (SEADEETSPGFDEQED) are compositionally biased toward acidic residues. Residues 332 to 342 (GSSSQTANKPS) show a composition bias toward polar residues. K340 carries the post-translational modification N6-acetyllysine. Position 448 is a phosphoserine (S448). Residues 610–795 (QPIPLLKQKM…TEQYSEYTGY (186 aa)) form a catalytic region. 726 to 727 (IE) is a binding site for substrate. D737 is an active-site residue. Residues N740 and Q754 each coordinate substrate. Active-site residues include E755 and E756. Substrate contacts are provided by residues Y795 and 869 to 874 (NWGCGA).

The protein belongs to the poly(ADP-ribose) glycohydrolase family. As to quaternary structure, interacts with PCNA. Interacts with NUDT5. In terms of tissue distribution, ubiquitously expressed.

The protein localises to the nucleus. It is found in the cytoplasm. It localises to the mitochondrion. Its subcellular location is the mitochondrion matrix. It catalyses the reaction [(1''-&gt;2')-ADP-alpha-D-ribose](n) + H2O = [(1''-&gt;2')-ADP-alpha-D-ribose](n-1) + ADP-D-ribose. In terms of biological role, poly(ADP-ribose) glycohydrolase that degrades poly(ADP-ribose) by hydrolyzing the ribose-ribose bonds present in poly(ADP-ribose). PARG acts both as an endo- and exoglycosidase, releasing poly(ADP-ribose) of different length as well as ADP-ribose monomers. It is however unable to cleave the ester bond between the terminal ADP-ribose and ADP-ribosylated residues, leaving proteins that are mono-ADP-ribosylated. Poly(ADP-ribose) is synthesized after DNA damage is only present transiently and is rapidly degraded by PARG. Required to prevent detrimental accumulation of poly(ADP-ribose) upon prolonged replicative stress, while it is not required for recovery from transient replicative stress. Responsible for the prevalence of mono-ADP-ribosylated proteins in cells, thanks to its ability to degrade poly(ADP-ribose) without cleaving the terminal protein-ribose bond. Required for retinoid acid-dependent gene transactivation, probably by removing poly(ADP-ribose) from histone demethylase KDM4D, allowing chromatin derepression at RAR-dependent gene promoters. Involved in the synthesis of ATP in the nucleus, together with PARP1, NMNAT1 and NUDT5. Nuclear ATP generation is required for extensive chromatin remodeling events that are energy-consuming. This chain is Poly(ADP-ribose) glycohydrolase, found in Homo sapiens (Human).